Consider the following 195-residue polypeptide: Ribosome maturation factor RimM (195 aa).

In terms of domain architecture, PRC barrel spans 101 to 191; that stretch reads ADEWYPKDLI…YLTLDPPGGL (91 aa).

Belongs to the RimM family. In terms of assembly, binds ribosomal protein uS19.

The protein resides in the cytoplasm. In terms of biological role, an accessory protein needed during the final step in the assembly of 30S ribosomal subunit, possibly for assembly of the head region. Essential for efficient processing of 16S rRNA. May be needed both before and after RbfA during the maturation of 16S rRNA. It has affinity for free ribosomal 30S subunits but not for 70S ribosomes. The polypeptide is Ribosome maturation factor RimM (Bifidobacterium adolescentis (strain ATCC 15703 / DSM 20083 / NCTC 11814 / E194a)).